The chain runs to 475 residues: Ribulose bisphosphate carboxylase large chain (475 aa).

Positions 1 to 2 are excised as a propeptide; the sequence is MA. An N-acetylproline modification is found at P3. An N6,N6,N6-trimethyllysine modification is found at K14. The substrate site is built by N123 and T173. Residue K175 is the Proton acceptor of the active site. Residue K177 participates in substrate binding. K201, D203, and E204 together coordinate Mg(2+). The residue at position 201 (K201) is an N6-carboxylysine. The active-site Proton acceptor is H294. 3 residues coordinate substrate: R295, H327, and S379.

This sequence belongs to the RuBisCO large chain family. Type I subfamily. In terms of assembly, heterohexadecamer of 8 large chains and 8 small chains; disulfide-linked. The disulfide link is formed within the large subunit homodimers. Requires Mg(2+) as cofactor. In terms of processing, the disulfide bond which can form in the large chain dimeric partners within the hexadecamer appears to be associated with oxidative stress and protein turnover.

It is found in the plastid. The protein resides in the chloroplast. The catalysed reaction is 2 (2R)-3-phosphoglycerate + 2 H(+) = D-ribulose 1,5-bisphosphate + CO2 + H2O. It catalyses the reaction D-ribulose 1,5-bisphosphate + O2 = 2-phosphoglycolate + (2R)-3-phosphoglycerate + 2 H(+). RuBisCO catalyzes two reactions: the carboxylation of D-ribulose 1,5-bisphosphate, the primary event in carbon dioxide fixation, as well as the oxidative fragmentation of the pentose substrate in the photorespiration process. Both reactions occur simultaneously and in competition at the same active site. The sequence is that of Ribulose bisphosphate carboxylase large chain from Tupiella akineta (Green alga).